Consider the following 124-residue polypeptide: Holo-[acyl-carrier-protein] synthase (124 aa).

Aspartate 8 and glutamate 57 together coordinate Mg(2+).

Belongs to the P-Pant transferase superfamily. AcpS family. It depends on Mg(2+) as a cofactor.

The protein resides in the cytoplasm. The catalysed reaction is apo-[ACP] + CoA = holo-[ACP] + adenosine 3',5'-bisphosphate + H(+). Its function is as follows. Transfers the 4'-phosphopantetheine moiety from coenzyme A to a Ser of acyl-carrier-protein. The polypeptide is Holo-[acyl-carrier-protein] synthase (Leptospira borgpetersenii serovar Hardjo-bovis (strain JB197)).